The following is a 183-amino-acid chain: MSRKARDPIVLPQGVEVSIQNDEISVKGPKGSLTQVLAKEVEIAVKGNEVFVTPAAHVVDRPGRIQGLYWALIANMVKGVHTGFEKRLEMIGVGFRAAVQGSLLDLSIGVSHPTKMPIPTGLEVSVEKNTLISIKGINKQLVGEFAACVRAKRPPEPYKGKGIRYENEYVRRKAGKAAKTGKK.

It belongs to the universal ribosomal protein uL6 family. In terms of assembly, part of the 50S ribosomal subunit.

Functionally, this protein binds to the 23S rRNA, and is important in its secondary structure. It is located near the subunit interface in the base of the L7/L12 stalk, and near the tRNA binding site of the peptidyltransferase center. The protein is Large ribosomal subunit protein uL6 of Chlamydia trachomatis serovar D (strain ATCC VR-885 / DSM 19411 / UW-3/Cx).